Reading from the N-terminus, the 349-residue chain is Achromobactin transport system permease protein CbrC (349 aa).

10 consecutive transmembrane segments (helical) span residues 32–52, 82–102, 111–131, 138–158, 168–188, 190–210, 216–236, 263–283, 290–310, and 325–345; these read LALL…KLML, VLAA…QAMI, ILGI…FLAA, LPLA…WLAW, VLTG…MLVF, PLTT…GASW, LGGW…QVRV, VALA…GLIA, LVAP…AGLV, and DLPA…YLLI.

It belongs to the binding-protein-dependent transport system permease family. FecCD subfamily.

Its subcellular location is the cell inner membrane. Part of the binding-protein-dependent transport system CbrABCD for uptake of the siderophore achromobactin. Probably responsible for the translocation of the substrate across the membrane. This is Achromobactin transport system permease protein CbrC (cbrC) from Dickeya dadantii (strain 3937) (Erwinia chrysanthemi (strain 3937)).